An 823-amino-acid chain; its full sequence is DNA ligase (823 aa).

Residues 32–36 (DAEYD), 81–82 (SL), and E121 each bind NAD(+). Catalysis depends on K123, which acts as the N6-AMP-lysine intermediate. Residues R144, E181, K299, and K323 each contribute to the NAD(+) site. Zn(2+) contacts are provided by C449, C452, C467, and C473. Residues 528-558 (ETADKGSSENENGDAETVSGDLSKYNTQNGK) are disordered. In terms of domain architecture, BRCT spans 746–823 (GINKAVAGKT…SEAELLTLLC (78 aa)).

This sequence belongs to the NAD-dependent DNA ligase family. LigA subfamily. Mg(2+) is required as a cofactor. Requires Mn(2+) as cofactor.

The catalysed reaction is NAD(+) + (deoxyribonucleotide)n-3'-hydroxyl + 5'-phospho-(deoxyribonucleotide)m = (deoxyribonucleotide)n+m + AMP + beta-nicotinamide D-nucleotide.. Its function is as follows. DNA ligase that catalyzes the formation of phosphodiester linkages between 5'-phosphoryl and 3'-hydroxyl groups in double-stranded DNA using NAD as a coenzyme and as the energy source for the reaction. It is essential for DNA replication and repair of damaged DNA. This chain is DNA ligase, found in Neisseria gonorrhoeae (strain NCCP11945).